A 472-amino-acid polypeptide reads, in one-letter code: Ribosomal protein uS12 methylthiotransferase RimO (472 aa).

The 114-residue stretch at 1 to 114 folds into the MTTase N-terminal domain; it reads MKFHIITLGC…IGDVVDTLQR (114 aa). [4Fe-4S] cluster is bound by residues C10, C46, C78, C171, C175, and C178. A Radical SAM core domain is found at 157–388; the sequence is RITGPSAYLK…MRLQQGISRQ (232 aa). In terms of domain architecture, TRAM spans 391-460; it reads RRWVGRVIRV…DYDLWGEMVE (70 aa).

It belongs to the methylthiotransferase family. RimO subfamily. Requires [4Fe-4S] cluster as cofactor.

Its subcellular location is the cytoplasm. It carries out the reaction L-aspartate(89)-[ribosomal protein uS12]-hydrogen + (sulfur carrier)-SH + AH2 + 2 S-adenosyl-L-methionine = 3-methylsulfanyl-L-aspartate(89)-[ribosomal protein uS12]-hydrogen + (sulfur carrier)-H + 5'-deoxyadenosine + L-methionine + A + S-adenosyl-L-homocysteine + 2 H(+). Its function is as follows. Catalyzes the methylthiolation of an aspartic acid residue of ribosomal protein uS12. This chain is Ribosomal protein uS12 methylthiotransferase RimO, found in Roseiflexus sp. (strain RS-1).